The sequence spans 381 residues: GDSL esterase/lipase At3g48460 (381 aa).

An N-terminal signal peptide occupies residues 1 to 26 (MSSSISPLLTTAISVAILLFSTISTA). Ser-45 serves as the catalytic Nucleophile. 3 N-linked (GlcNAc...) asparagine glycosylation sites follow: Asn-112, Asn-140, and Asn-258. Residues Asp-344 and His-347 contribute to the active site.

It belongs to the 'GDSL' lipolytic enzyme family.

It is found in the secreted. The chain is GDSL esterase/lipase At3g48460 from Arabidopsis thaliana (Mouse-ear cress).